The primary structure comprises 172 residues: 3-hydroxydecanoyl-[acyl-carrier-protein] dehydratase (172 aa).

Residue His71 is part of the active site.

Belongs to the thioester dehydratase family. FabA subfamily. Homodimer.

The protein resides in the cytoplasm. It carries out the reaction a (3R)-hydroxyacyl-[ACP] = a (2E)-enoyl-[ACP] + H2O. It catalyses the reaction (3R)-hydroxydecanoyl-[ACP] = (2E)-decenoyl-[ACP] + H2O. The enzyme catalyses (2E)-decenoyl-[ACP] = (3Z)-decenoyl-[ACP]. The protein operates within lipid metabolism; fatty acid biosynthesis. Necessary for the introduction of cis unsaturation into fatty acids. Catalyzes the dehydration of (3R)-3-hydroxydecanoyl-ACP to E-(2)-decenoyl-ACP and then its isomerization to Z-(3)-decenoyl-ACP. Can catalyze the dehydratase reaction for beta-hydroxyacyl-ACPs with saturated chain lengths up to 16:0, being most active on intermediate chain length. This Pectobacterium atrosepticum (strain SCRI 1043 / ATCC BAA-672) (Erwinia carotovora subsp. atroseptica) protein is 3-hydroxydecanoyl-[acyl-carrier-protein] dehydratase.